We begin with the raw amino-acid sequence, 442 residues long: 23S rRNA (uracil(1939)-C(5))-methyltransferase RlmD (442 aa).

The 66-residue stretch at 10-75 folds into the TRAM domain; the sequence is AKQTAKNCCK…RQYGRAKANK (66 aa). The [4Fe-4S] cluster site is built by Cys-88, Cys-94, Cys-97, and Cys-173. S-adenosyl-L-methionine-binding residues include Gln-276, Phe-305, Asn-310, Glu-326, Asn-353, and Asp-374. The active-site Nucleophile is Cys-400.

It belongs to the class I-like SAM-binding methyltransferase superfamily. RNA M5U methyltransferase family. RlmD subfamily.

The enzyme catalyses uridine(1939) in 23S rRNA + S-adenosyl-L-methionine = 5-methyluridine(1939) in 23S rRNA + S-adenosyl-L-homocysteine + H(+). Functionally, catalyzes the formation of 5-methyl-uridine at position 1939 (m5U1939) in 23S rRNA. This is 23S rRNA (uracil(1939)-C(5))-methyltransferase RlmD from Haemophilus ducreyi (strain 35000HP / ATCC 700724).